Reading from the N-terminus, the 600-residue chain is Prostaglandin G/H synthase 1 (600 aa).

Positions Met-1 to Pro-24 are cleaved as a signal peptide. An EGF-like domain is found at Pro-32–Thr-70. Disulfide bonds link Cys-36–Cys-47, Cys-37–Cys-159, Cys-41–Cys-57, and Cys-59–Cys-69. Asn-68, Asn-104, and Asn-144 each carry an N-linked (GlcNAc...) asparagine glycan. His-207 serves as the catalytic Proton acceptor. Tyr-385 serves as the catalytic For cyclooxygenase activity. His-388 lines the heme b pocket. Residue Asn-410 is glycosylated (N-linked (GlcNAc...) asparagine). Cysteines 569 and 575 form a disulfide.

This sequence belongs to the prostaglandin G/H synthase family. Homodimer. Heme b is required as a cofactor.

Its subcellular location is the microsome membrane. It is found in the endoplasmic reticulum membrane. It carries out the reaction (5Z,8Z,11Z,14Z)-eicosatetraenoate + AH2 + 2 O2 = prostaglandin H2 + A + H2O. It catalyses the reaction (5Z,8Z,11Z,14Z)-eicosatetraenoate + 2 O2 = prostaglandin G2. The catalysed reaction is prostaglandin G2 + AH2 = prostaglandin H2 + A + H2O. The enzyme catalyses (9Z,12Z)-octadecadienoate + AH2 + O2 = (9R)-hydroxy-(10E,12Z)-octadecadienoate + A + H2O. It carries out the reaction (9Z,12Z)-octadecadienoate + AH2 + O2 = (9S)-hydroxy-(10E,12Z)-octadecadienoate + A + H2O. It catalyses the reaction (9Z,12Z)-octadecadienoate + AH2 + O2 = (13S)-hydroxy-(9Z,11E)-octadecadienoate + A + H2O. The catalysed reaction is (9Z,12Z)-octadecadienoate + AH2 + O2 = (13R)-hydroxy-(9Z,11E)-octadecadienoate + A + H2O. It functions in the pathway lipid metabolism; prostaglandin biosynthesis. With respect to regulation, the cyclooxygenase activity is inhibited by nonsteroidal anti-inflammatory drugs (NSAIDs) including ibuprofen, flurbiprofen, ketoprofen, naproxen, flurbiprofen, anirolac, fenclofenac and diclofenac. Its function is as follows. Dual cyclooxygenase and peroxidase that plays an important role in the biosynthesis pathway of prostanoids, a class of C20 oxylipins mainly derived from arachidonate ((5Z,8Z,11Z,14Z)-eicosatetraenoate, AA, C20:4(n-6)), with a particular role in the inflammatory response. The cyclooxygenase activity oxygenates AA to the hydroperoxy endoperoxide prostaglandin G2 (PGG2), and the peroxidase activity reduces PGG2 to the hydroxy endoperoxide prostaglandin H2 (PGH2), the precursor of all 2-series prostaglandins and thromboxanes. This complex transformation is initiated by abstraction of hydrogen at carbon 13 (with S-stereochemistry), followed by insertion of molecular O2 to form the endoperoxide bridge between carbon 9 and 11 that defines prostaglandins. The insertion of a second molecule of O2 (bis-oxygenase activity) yields a hydroperoxy group in PGG2 that is then reduced to PGH2 by two electrons. Involved in the constitutive production of prostanoids in particular in the stomach and platelets. In gastric epithelial cells, it is a key step in the generation of prostaglandins, such as prostaglandin E2 (PGE2), which plays an important role in cytoprotection. In platelets, it is involved in the generation of thromboxane A2 (TXA2), which promotes platelet activation and aggregation, vasoconstriction and proliferation of vascular smooth muscle cells. Can also use linoleate (LA, (9Z,12Z)-octadecadienoate, C18:2(n-6)) as substrate and produce hydroxyoctadecadienoates (HODEs) in a regio- and stereospecific manner, being (9R)-HODE ((9R)-hydroxy-(10E,12Z)-octadecadienoate) and (13S)-HODE ((13S)-hydroxy-(9Z,11E)-octadecadienoate) its major products. The protein is Prostaglandin G/H synthase 1 (PTGS1) of Bos taurus (Bovine).